The chain runs to 374 residues: Alanine racemase (374 aa).

The active-site Proton acceptor; specific for D-alanine is the Lys40. Lys40 is modified (N6-(pyridoxal phosphate)lysine). Arg139 provides a ligand contact to substrate. Tyr261 acts as the Proton acceptor; specific for L-alanine in catalysis. Residue Met309 participates in substrate binding.

Belongs to the alanine racemase family. The cofactor is pyridoxal 5'-phosphate.

It carries out the reaction L-alanine = D-alanine. Its pathway is amino-acid biosynthesis; D-alanine biosynthesis; D-alanine from L-alanine: step 1/1. Its function is as follows. Catalyzes the interconversion of L-alanine and D-alanine. May also act on other amino acids. The polypeptide is Alanine racemase (alr) (Rhodospirillum rubrum (strain ATCC 11170 / ATH 1.1.1 / DSM 467 / LMG 4362 / NCIMB 8255 / S1)).